A 119-amino-acid chain; its full sequence is Large ribosomal subunit protein bL20 (119 aa).

This sequence belongs to the bacterial ribosomal protein bL20 family.

Its function is as follows. Binds directly to 23S ribosomal RNA and is necessary for the in vitro assembly process of the 50S ribosomal subunit. It is not involved in the protein synthesizing functions of that subunit. In Streptococcus pneumoniae serotype 2 (strain D39 / NCTC 7466), this protein is Large ribosomal subunit protein bL20.